A 131-amino-acid polypeptide reads, in one-letter code: Large ribosomal subunit protein bL19c (131 aa).

The protein belongs to the bacterial ribosomal protein bL19 family.

The protein localises to the plastid. It localises to the cyanelle. Functionally, this protein is located at the 30S-50S ribosomal subunit interface and may play a role in the structure and function of the aminoacyl-tRNA binding site. This is Large ribosomal subunit protein bL19c (rpl19) from Cyanophora paradoxa.